Reading from the N-terminus, the 127-residue chain is MEKWKERVRIGGYAIIDIGGKQLRVQPGRFYDVRHFPSNLNTRGSDTKVSMGRVLLIRDGSKIDIGSPWLANAVVKGRILHNCFEDKLVIKKIFSKRKTRGSRGCRGSIIRFAIDSIHFNCSNATNK.

Belongs to the bacterial ribosomal protein bL21 family. Part of the 50S ribosomal subunit.

Its subcellular location is the plastid. The protein resides in the chloroplast. This protein binds to 23S rRNA. The sequence is that of Large ribosomal subunit protein bL21c from Adiantum capillus-veneris (Maidenhair fern).